Reading from the N-terminus, the 818-residue chain is Adhesion G protein-coupled receptor E5 (818 aa).

Positions 1–23 (MRGVRCPGLLVVCILLSLSGAGT) are cleaved as a signal peptide. Topologically, residues 24-533 (QKAESKNCAK…VQDPRLELIT (510 aa)) are extracellular. The 42-residue stretch at 27–68 (ESKNCAKWCPINSKCVSNRSCVCKPGFSSEKELITNPAESCE) folds into the EGF-like 1 domain. Intrachain disulfides connect Cys31–Cys41, Cys35–Cys47, Cys49–Cys67, Cys73–Cys86, Cys80–Cys95, Cys97–Cys118, Cys169–Cys182, Cys176–Cys191, Cys193–Cys212, Cys218–Cys231, Cys225–Cys240, and Cys242–Cys260. Asn44 carries N-linked (GlcNAc...) asparagine glycosylation. The EGF-like 2; calcium-binding domain maps to 69–119 (DINECLLPGFSCGDFAMCKNSEGSYTCVCNLGYKLLSGAESFVNESENTCQ). Asn112 is a glycosylation site (N-linked (GlcNAc...) asparagine). Positions 165–213 (DVNECISGQNHCHQSTHCINKLGGYSCICRQGWKPVPGSPNGPVSTVCE) constitute an EGF-like 3; calcium-binding domain. Positions 214–261 (DVDECSSGQHQCHNSTVCKNTVGSYKCHCRPGWKPTSGSLRGPDTICQ) constitute an EGF-like 4; calcium-binding domain. An N-linked (GlcNAc...) asparagine glycan is attached at Asn227. 2 N-linked (GlcNAc...) asparagine glycosylation sites follow: Asn299 and Asn395. The 179-residue stretch at 347–525 (PFTYTSPSNT…AILMAQYHVQ (179 aa)) folds into the GAIN-B domain. Ser425 carries the phosphoserine modification. N-linked (GlcNAc...) asparagine glycans are attached at residues Asn461 and Asn502. 2 disulfide bridges follow: Cys482/Cys507 and Cys499/Cys509. The interval 482–525 (CAFWKAHNGNGYWDTDGCSMNGTGFCHCNHLTSFAILMAQYHVQ) is GPS. A helical membrane pass occupies residues 534 to 554 (KVGLLLSLICLLLCILTFLLV). The Cytoplasmic portion of the chain corresponds to 555–562 (KPIQSSRT). The chain crosses the membrane as a helical span at residues 563 to 583 (MVHLHLCICLFLGSIIFLVGV). The Extracellular portion of the chain corresponds to 584–602 (ENEGGEVGLRCRLVAMMLH). The chain crosses the membrane as a helical span at residues 603 to 623 (FCFLAAFCWMALEGVELYFLV). The Cytoplasmic segment spans residues 624 to 637 (VRVFQGQGLSTWQR). A helical membrane pass occupies residues 638 to 658 (CLIGYGVPLLIVAISMAVVKM). Over 659–679 (DGYGHATYCWLDFRKQGFLWS) the chain is Extracellular. The helical transmembrane segment at 680 to 700 (FSGPVAFIIFCNAAIFVITVW) threads the bilayer. Residues 701-723 (KLTKKFSEINPNMKKLRKARVLT) are Cytoplasmic-facing. A helical membrane pass occupies residues 724–744 (ITAIAQLLVLGCTWGFGLFLF). Topologically, residues 745–752 (NPHSTWLS) are extracellular. A helical membrane pass occupies residues 753 to 773 (YIFTLLNCLQGLFLYVMLCLL). Topologically, residues 774-818 (NKKVREEYWKWACMVTGSKYTEFNSSTTGTGTSQTRALRSSESGM) are cytoplasmic. Ser798 is modified (phosphoserine). Residues 799–808 (STTGTGTSQT) show a composition bias toward low complexity. Residues 799–818 (STTGTGTSQTRALRSSESGM) form a disordered region. Thr808 carries the post-translational modification Phosphothreonine. Residues 809–818 (RALRSSESGM) show a composition bias toward polar residues. A phosphoserine mark is found at Ser814 and Ser816.

Belongs to the G-protein coupled receptor 2 family. LN-TM7 subfamily. As to quaternary structure, forms a heterodimer, consisting of a large extracellular region (alpha subunit) non-covalently linked to a seven-transmembrane moiety (beta subunit). Interacts with complement decay-accelerating factor (DAF). The largest isoform (isoform 1) do not interact with DAF. Also interacts with chondroitin sulfate. In terms of processing, proteolytically cleaved into 2 subunits, an extracellular alpha subunit and a seven-transmembrane subunit. In terms of tissue distribution, although predominantly expressed by cells of the immune system, expressed ubiquitously with particularly high levels of expression in the lung and the thymus gland. In the spleen, expression is detected on most myeloid cells and variable portions of T-cells, B-cells and NK cells. In the bone marrow, expressed in nearly all myeloid cells, whereas little if any expression is found on erythroid cells.

The protein localises to the cell membrane. It localises to the secreted. The protein resides in the extracellular space. Receptor potentially involved in both adhesion and signaling processes early after leukocyte activation. Plays an essential role in leukocyte migration. The protein is Adhesion G protein-coupled receptor E5 of Mus musculus (Mouse).